The sequence spans 325 residues: Acetyl-coenzyme A carboxylase carboxyl transferase subunit alpha (325 aa).

In terms of domain architecture, CoA carboxyltransferase C-terminal spans 43–297 (ELENNSTQLR…KTSLIAHLRQ (255 aa)).

This sequence belongs to the AccA family. In terms of assembly, acetyl-CoA carboxylase is a heterohexamer composed of biotin carboxyl carrier protein (AccB), biotin carboxylase (AccC) and two subunits each of ACCase subunit alpha (AccA) and ACCase subunit beta (AccD).

It localises to the cytoplasm. The catalysed reaction is N(6)-carboxybiotinyl-L-lysyl-[protein] + acetyl-CoA = N(6)-biotinyl-L-lysyl-[protein] + malonyl-CoA. It functions in the pathway lipid metabolism; malonyl-CoA biosynthesis; malonyl-CoA from acetyl-CoA: step 1/1. Component of the acetyl coenzyme A carboxylase (ACC) complex. First, biotin carboxylase catalyzes the carboxylation of biotin on its carrier protein (BCCP) and then the CO(2) group is transferred by the carboxyltransferase to acetyl-CoA to form malonyl-CoA. The sequence is that of Acetyl-coenzyme A carboxylase carboxyl transferase subunit alpha from Cyanothece sp. (strain PCC 7425 / ATCC 29141).